The sequence spans 360 residues: Nicotinate-nucleotide--dimethylbenzimidazole phosphoribosyltransferase (360 aa).

The active-site Proton acceptor is glutamate 327.

Belongs to the CobT family.

The enzyme catalyses 5,6-dimethylbenzimidazole + nicotinate beta-D-ribonucleotide = alpha-ribazole 5'-phosphate + nicotinate + H(+). It participates in nucleoside biosynthesis; alpha-ribazole biosynthesis; alpha-ribazole from 5,6-dimethylbenzimidazole: step 1/2. Catalyzes the synthesis of alpha-ribazole-5'-phosphate from nicotinate mononucleotide (NAMN) and 5,6-dimethylbenzimidazole (DMB). The sequence is that of Nicotinate-nucleotide--dimethylbenzimidazole phosphoribosyltransferase from Shewanella baltica (strain OS155 / ATCC BAA-1091).